The sequence spans 202 residues: MTTLSDYVDFSQDSFKYAALSIAFNPIFWNVVARAEYRSHFLTRIFGSPYRGCYFLAITIFSLGILRDHIYQQALEDQPYYAPVHQPVLGGALFAVGSVLVLSSMYALGVTGTYLGDYFGILMDAPVTGFPFNVTGSPMYWGSTLNFLGVALYKGKVAGILLTALVFVLYWFALKWEDPFTAEIYAKRERERAKSKRGGKNQ.

The Lumenal segment spans residues M1 to Q12. An intramembrane region (helical) is located at residues D13 to A33. The Lumenal segment spans residues R34–I45. A helical transmembrane segment spans residues F46 to L66. Residues R67 to G90 are Cytoplasmic-facing. Residues G91 to T111 traverse the membrane as a helical segment. A95 to G97 contacts S-adenosyl-L-methionine. Over G112–K154 the chain is Lumenal. The chain crosses the membrane as a helical span at residues G155–K175. The Cytoplasmic segment spans residues W176–Q202. E177–D178 lines the S-adenosyl-L-methionine pocket.

Belongs to the class VI-like SAM-binding methyltransferase superfamily. PEMT/PEM2 methyltransferase family.

It localises to the endoplasmic reticulum membrane. Its subcellular location is the mitochondrion membrane. It catalyses the reaction a 1,2-diacyl-sn-glycero-3-phospho-N-methylethanolamine + S-adenosyl-L-methionine = a 1,2-diacyl-sn-glycero-3-phospho-N,N-dimethylethanolamine + S-adenosyl-L-homocysteine + H(+). The catalysed reaction is a 1,2-diacyl-sn-glycero-3-phospho-N,N-dimethylethanolamine + S-adenosyl-L-methionine = a 1,2-diacyl-sn-glycero-3-phosphocholine + S-adenosyl-L-homocysteine + H(+). It functions in the pathway phospholipid metabolism; phosphatidylcholine biosynthesis. Functionally, catalyzes the second two steps of the methylation pathway of phosphatidylcholine biosynthesis, the SAM-dependent methylation of phosphatidylmonomethylethanolamine (PMME) to phosphatidyldimethylethanolamine (PDME) and of PDME to phosphatidylcholine (PC). The chain is Phosphatidyl-N-methylethanolamine N-methyltransferase from Emericella nidulans (strain FGSC A4 / ATCC 38163 / CBS 112.46 / NRRL 194 / M139) (Aspergillus nidulans).